A 21-amino-acid chain; its full sequence is Testis ecdysiotropin peptide 1 (21 aa).

The interval 1–21 is disordered; it reads ISDFDEYEPLNDADNNEVLDF.

Functionally, start or boost ecdysteroid synthesis in testis of larvae and pupae. The chain is Testis ecdysiotropin peptide 1 from Lymantria dispar (Gypsy moth).